The chain runs to 365 residues: DNA replication and repair protein RecF (365 aa).

Position 30–37 (30–37 (GPNGSGKT)) interacts with ATP.

Belongs to the RecF family.

The protein localises to the cytoplasm. In terms of biological role, the RecF protein is involved in DNA metabolism; it is required for DNA replication and normal SOS inducibility. RecF binds preferentially to single-stranded, linear DNA. It also seems to bind ATP. The chain is DNA replication and repair protein RecF from Azotobacter vinelandii (strain DJ / ATCC BAA-1303).